Consider the following 153-residue polypeptide: UPF0756 membrane protein Bcer98_3279 (153 aa).

4 helical membrane passes run 8 to 28, 54 to 74, 87 to 107, and 117 to 137; these read FLFI…IVAI, LGVT…EIGF, WIAL…LQLL, and LVFG…GPLI.

The protein belongs to the UPF0756 family.

The protein localises to the cell membrane. In Bacillus cytotoxicus (strain DSM 22905 / CIP 110041 / 391-98 / NVH 391-98), this protein is UPF0756 membrane protein Bcer98_3279.